The sequence spans 419 residues: S-adenosylmethionine synthase (419 aa).

Residue His-15 participates in ATP binding. Position 17 (Asp-17) interacts with Mg(2+). Glu-43 contributes to the K(+) binding site. Glu-56 and Gln-100 together coordinate L-methionine. Residues 100–110 (QSPDIAQGVDE) form a flexible loop region. ATP-binding positions include 171–173 (DGK), 248–249 (KF), Asp-257, 263–264 (RK), Ala-280, and Lys-284. Position 257 (Asp-257) interacts with L-methionine. Lys-288 lines the L-methionine pocket.

This sequence belongs to the AdoMet synthase family. As to quaternary structure, homotetramer; dimer of dimers. Mg(2+) serves as cofactor. Requires K(+) as cofactor.

It is found in the cytoplasm. The enzyme catalyses L-methionine + ATP + H2O = S-adenosyl-L-methionine + phosphate + diphosphate. It participates in amino-acid biosynthesis; S-adenosyl-L-methionine biosynthesis; S-adenosyl-L-methionine from L-methionine: step 1/1. Its function is as follows. Catalyzes the formation of S-adenosylmethionine (AdoMet) from methionine and ATP. The overall synthetic reaction is composed of two sequential steps, AdoMet formation and the subsequent tripolyphosphate hydrolysis which occurs prior to release of AdoMet from the enzyme. This is S-adenosylmethionine synthase from Synechococcus sp. (strain CC9311).